A 194-amino-acid chain; its full sequence is CDRRFSRSDELTRHIRIHTGQKPFQCRICMRNFSRSDHLTTHIRTHTGEKPFACDICGRKFARSDERKRHTKIHLRQKDKKVEKAASVSTTSSPVAAYSSSVATSYSSSIATTYPSPVRTVYSSPASSSYPSPAHTAFPSPSIATTYPSGTATFQTQVATSFPSPAVTNNFSSQVTSALSDMTSTFSPRTIEIC.

C2H2-type zinc fingers lie at residues 1–18 (CDRR…IRIH), 24–46 (FQCR…IRTH), and 52–74 (FACD…TKIH). The tract at residues 66–88 (ERKRHTKIHLRQKDKKVEKAASV) is disordered. Residues 69–79 (RHTKIHLRQKD) are compositionally biased toward basic residues.

Belongs to the EGR C2H2-type zinc-finger protein family.

It localises to the nucleus. The protein localises to the cytoplasm. Transcriptional regulator. Recognizes and binds to the DNA sequence 5'-GCG(T/G)GGGCG-3'(EGR-site) in the promoter region of target genes. Binds double-stranded target DNA, irrespective of the cytosine methylation status. Regulates the transcription of numerous target genes, and thereby plays an important role in regulating the response to growth factors, DNA damage, and ischemia. Plays a role in the regulation of cell survival, proliferation and cell death. Mediates responses to ischemia and hypoxia; regulates the expression of proteins that are involved in inflammatory processes. Plays a role in regulating the expression of circadian clock genes. The protein is Early growth response protein 1 (EGR1) of Coturnix japonica (Japanese quail).